The primary structure comprises 425 residues: Serine--tRNA ligase (425 aa).

2 disordered regions span residues 43–69 (QRSS…SDPK) and 108–134 (LPNL…WGKP). The span at 117–134 (PEGRDENDNQERHRWGKP) shows a compositional bias: basic and acidic residues. Position 233 to 235 (233 to 235 (TAE)) interacts with L-serine. Residue 264–266 (RRE) coordinates ATP. E287 provides a ligand contact to L-serine. 351–354 (EISS) is an ATP binding site. S385 serves as a coordination point for L-serine.

The protein belongs to the class-II aminoacyl-tRNA synthetase family. Type-1 seryl-tRNA synthetase subfamily. As to quaternary structure, homodimer. The tRNA molecule binds across the dimer.

The protein localises to the cytoplasm. It catalyses the reaction tRNA(Ser) + L-serine + ATP = L-seryl-tRNA(Ser) + AMP + diphosphate + H(+). The catalysed reaction is tRNA(Sec) + L-serine + ATP = L-seryl-tRNA(Sec) + AMP + diphosphate + H(+). The protein operates within aminoacyl-tRNA biosynthesis; selenocysteinyl-tRNA(Sec) biosynthesis; L-seryl-tRNA(Sec) from L-serine and tRNA(Sec): step 1/1. Its function is as follows. Catalyzes the attachment of serine to tRNA(Ser). Is also able to aminoacylate tRNA(Sec) with serine, to form the misacylated tRNA L-seryl-tRNA(Sec), which will be further converted into selenocysteinyl-tRNA(Sec). This chain is Serine--tRNA ligase, found in Prochlorococcus marinus (strain MIT 9313).